We begin with the raw amino-acid sequence, 98 residues long: YcgL domain-containing protein Ping_1076 (98 aa).

One can recognise a YcgL domain in the interval 1-85 (MLCAVYKSIR…PPVNHLQEHK (85 aa)). The segment at 75-98 (PPPVNHLQEHKDWKKKRQENKNEI) is disordered.

The polypeptide is YcgL domain-containing protein Ping_1076 (Psychromonas ingrahamii (strain DSM 17664 / CCUG 51855 / 37)).